A 723-amino-acid polypeptide reads, in one-letter code: Catalase-peroxidase (723 aa).

Positions 96–224 (WHAAGTYRIQ…LAAVQMGLIY (129 aa)) form a cross-link, tryptophyl-tyrosyl-methioninium (Trp-Tyr) (with M-250). His97 acts as the Proton acceptor in catalysis. A cross-link (tryptophyl-tyrosyl-methioninium (Tyr-Met) (with W-96)) is located at residues 224-250 (YVNPEGVNSQPDPIKTGEQVRVTFARM). His265 provides a ligand contact to heme b.

This sequence belongs to the peroxidase family. Peroxidase/catalase subfamily. Homodimer or homotetramer. It depends on heme b as a cofactor. In terms of processing, formation of the three residue Trp-Tyr-Met cross-link is important for the catalase, but not the peroxidase activity of the enzyme.

The enzyme catalyses H2O2 + AH2 = A + 2 H2O. The catalysed reaction is 2 H2O2 = O2 + 2 H2O. Its function is as follows. Bifunctional enzyme with both catalase and broad-spectrum peroxidase activity. This is Catalase-peroxidase from Marinobacter nauticus (strain ATCC 700491 / DSM 11845 / VT8) (Marinobacter aquaeolei).